The sequence spans 175 residues: Shikimate kinase (175 aa).

Residue 14 to 19 (GAGKST) participates in ATP binding. Serine 18 lines the Mg(2+) pocket. 3 residues coordinate substrate: aspartate 36, arginine 60, and glycine 82. Arginine 120 serves as a coordination point for ATP. Position 140 (arginine 140) interacts with substrate. Glutamine 157 is an ATP binding site.

It belongs to the shikimate kinase family. Monomer. Mg(2+) serves as cofactor.

The protein resides in the cytoplasm. It catalyses the reaction shikimate + ATP = 3-phosphoshikimate + ADP + H(+). It functions in the pathway metabolic intermediate biosynthesis; chorismate biosynthesis; chorismate from D-erythrose 4-phosphate and phosphoenolpyruvate: step 5/7. In terms of biological role, catalyzes the specific phosphorylation of the 3-hydroxyl group of shikimic acid using ATP as a cosubstrate. This is Shikimate kinase from Actinobacillus succinogenes (strain ATCC 55618 / DSM 22257 / CCUG 43843 / 130Z).